The sequence spans 126 residues: Histone H2B type 1-C/E/G (126 aa).

The span at 1 to 12 shows a compositional bias: low complexity; sequence MPEPAKSAPAPK. Positions 1–36 are disordered; it reads MPEPAKSAPAPKKGSKKAVTKAQKKDGKKRKRSRKE. Position 2 is an N-acetylproline (Pro2). At Glu3 the chain carries ADP-ribosyl glutamic acid. Position 6 is an N6-(2-hydroxyisobutyryl)lysine; alternate (Lys6). An N6-(beta-hydroxybutyryl)lysine; alternate modification is found at Lys6. Residue Lys6 is modified to N6-acetyllysine; alternate. Lys6 carries the N6-butyryllysine; alternate modification. Residue Lys6 is modified to N6-crotonyllysine; alternate. Residue Lys6 is modified to N6-lactoyllysine; alternate. A Glycyl lysine isopeptide (Lys-Gly) (interchain with G-Cter in SUMO2); alternate cross-link involves residue Lys6. Ser7 carries the ADP-ribosylserine modification. At Lys12 the chain carries N6-(beta-hydroxybutyryl)lysine; alternate. Lys12 and Lys13 each carry N6-acetyllysine; alternate. N6-crotonyllysine; alternate is present on residues Lys12 and Lys13. The residue at position 12 (Lys12) is an N6-lactoyllysine; alternate. An N6-(2-hydroxyisobutyryl)lysine; alternate modification is found at Lys13. Ser15 is subject to Phosphoserine; by STK4/MST1. Lys16, Lys17, Lys21, and Lys24 each carry N6-acetyllysine; alternate. An N6-crotonyllysine; alternate mark is found at Lys16, Lys17, Lys21, and Lys24. Lys16, Lys17, Lys21, and Lys24 each carry N6-lactoyllysine; alternate. At Lys17 the chain carries N6-glutaryllysine; alternate. Lys21 and Lys24 each carry N6-(2-hydroxyisobutyryl)lysine; alternate. Lys21 is modified (N6-(beta-hydroxybutyryl)lysine; alternate). Lys21 is modified (N6-butyryllysine; alternate). Lys21 is covalently cross-linked (Glycyl lysine isopeptide (Lys-Gly) (interchain with G-Cter in SUMO2); alternate). Lys25 carries the post-translational modification N6-(2-hydroxyisobutyryl)lysine. Residue Lys35 is modified to N6-(2-hydroxyisobutyryl)lysine; alternate. Lys35 carries the post-translational modification N6-(beta-hydroxybutyryl)lysine; alternate. Lys35 is modified (N6-crotonyllysine; alternate). Lys35 bears the N6-glutaryllysine; alternate mark. At Lys35 the chain carries N6-succinyllysine; alternate. A Glycyl lysine isopeptide (Lys-Gly) (interchain with G-Cter in ubiquitin); alternate cross-link involves residue Lys35. Glu36 carries the polyADP-ribosyl glutamic acid modification. Ser37 is modified (phosphoserine; by AMPK). Lys44, Lys47, and Lys58 each carry N6-(2-hydroxyisobutyryl)lysine; alternate. Position 44 is an N6-lactoyllysine; alternate (Lys44). Lys44 and Lys47 each carry N6-glutaryllysine; alternate. The residue at position 47 (Lys47) is an N6-methyllysine; alternate. The residue at position 58 (Lys58) is an N6,N6-dimethyllysine; alternate. Arg80 is modified (dimethylated arginine). Position 86 is an N6-(2-hydroxyisobutyryl)lysine; alternate (Lys86). Lys86 carries the N6-acetyllysine; alternate modification. Residue Lys86 is modified to N6-lactoyllysine; alternate. An N6,N6,N6-trimethyllysine; alternate modification is found at Lys86. Omega-N-methylarginine occurs at positions 87 and 93. Lys109 is subject to N6-(2-hydroxyisobutyryl)lysine; alternate. The residue at position 109 (Lys109) is an N6-(beta-hydroxybutyryl)lysine; alternate. Residue Lys109 is modified to N6-lactoyllysine; alternate. An N6-glutaryllysine; alternate modification is found at Lys109. Lys109 is subject to N6-methyllysine; alternate. O-linked (GlcNAc) serine glycosylation occurs at Ser113. A Phosphothreonine modification is found at Thr116. N6-(2-hydroxyisobutyryl)lysine; alternate occurs at positions 117 and 121. N6-(beta-hydroxybutyryl)lysine; alternate is present on Lys117. N6-lactoyllysine; alternate occurs at positions 117 and 121. An N6-glutaryllysine; alternate mark is found at Lys117 and Lys121. An N6-succinyllysine; alternate mark is found at Lys117 and Lys121. Lys117 is modified (N6-methylated lysine; alternate). Lys121 participates in a covalent cross-link: Glycyl lysine isopeptide (Lys-Gly) (interchain with G-Cter in ubiquitin); alternate.

The protein belongs to the histone H2B family. As to quaternary structure, the nucleosome is a histone octamer containing two molecules each of H2A, H2B, H3 and H4 assembled in one H3-H4 heterotetramer and two H2A-H2B heterodimers. The octamer wraps approximately 147 bp of DNA. Interacts with VRK1; the interaction is mediated by the nucleosome acidic patch, a cluster of negatively charged residues of H2A and H2B forming a cleft within the nucleosome core. Monoubiquitination at Lys-35 (H2BK34Ub) by the MSL1/MSL2 dimer is required for histone H3 'Lys-4' (H3K4me) and 'Lys-79' (H3K79me) methylation and transcription activation at specific gene loci, such as HOXA9 and MEIS1 loci. Similarly, monoubiquitination at Lys-121 (H2BK120Ub) by the RNF20/40 complex gives a specific tag for epigenetic transcriptional activation and is also prerequisite for histone H3 'Lys-4' and 'Lys-79' methylation. It also functions cooperatively with the FACT dimer to stimulate elongation by RNA polymerase II. H2BK120Ub also acts as a regulator of mRNA splicing: deubiquitination by USP49 is required for efficient cotranscriptional splicing of a large set of exons. Post-translationally, phosphorylated on Ser-15 (H2BS14ph) by STK4/MST1 during apoptosis; which facilitates apoptotic chromatin condensation. Also phosphorylated on Ser-15 in response to DNA double strand breaks (DSBs), and in correlation with somatic hypermutation and immunoglobulin class-switch recombination. Phosphorylation at Ser-37 (H2BS36ph) by AMPK in response to stress promotes transcription. In terms of processing, glcNAcylation at Ser-113 promotes monoubiquitination of Lys-121. It fluctuates in response to extracellular glucose, and associates with transcribed genes. ADP-ribosylated by PARP1 or PARP2 on Ser-7 (H2BS6ADPr) in response to DNA damage. H2BS6ADPr promotes recruitment of CHD1L. Mono-ADP-ribosylated on Glu-3 (H2BE2ADPr) by PARP3 in response to single-strand breaks. Poly ADP-ribosylation on Glu-36 (H2BE35ADPr) by PARP1 regulates adipogenesis: it inhibits phosphorylation at Ser-37 (H2BS36ph), thereby blocking expression of pro-adipogenetic genes. Post-translationally, crotonylation (Kcr) is specifically present in male germ cells and marks testis-specific genes in post-meiotic cells, including X-linked genes that escape sex chromosome inactivation in haploid cells. Crotonylation marks active promoters and enhancers and confers resistance to transcriptional repressors. It is also associated with post-meiotically activated genes on autosomes. In terms of processing, hydroxybutyrylation of histones is induced by starvation. Lactylated in macrophages by EP300/P300 by using lactoyl-CoA directly derived from endogenous or exogenous lactate, leading to stimulates gene transcription.

The protein resides in the nucleus. It localises to the chromosome. In terms of biological role, core component of nucleosome. Nucleosomes wrap and compact DNA into chromatin, limiting DNA accessibility to the cellular machineries which require DNA as a template. Histones thereby play a central role in transcription regulation, DNA repair, DNA replication and chromosomal stability. DNA accessibility is regulated via a complex set of post-translational modifications of histones, also called histone code, and nucleosome remodeling. The polypeptide is Histone H2B type 1-C/E/G (Mus musculus (Mouse)).